Reading from the N-terminus, the 711-residue chain is Denticleless protein homolog B (711 aa).

WD repeat units follow at residues 47–89 (GRAV…MQRL), 96–135 (AHTNAVFDIAWVPGEHKLVTASGDQTAKLWDVKAGELIGE), and 138–178 (GHQC…KDGF). The short motif at 168–171 (WDTR) is the DDB1-binding motif element. A Nuclear localization signal motif is present at residues 197-204 (PSKVKKRK). WD repeat units lie at residues 215–254 (DSQQSVTVVIFQDEYTVISAGAVDGVVKIWDLRKNYSTYR), 270–309 (TRKLGYSSLVLDPTGTNLFASCTDDNVYMFNATGLKTDPV), 314–355 (GHQN…AAPI), and 359–398 (GHCQEVTSVAWCQSDFTKIATCSDDNTVRIWRLNRSSEDS). The DDB1-binding motif motif lies at 244 to 247 (WDLR). Disordered stretches follow at residues 473-524 (QTPK…AFTP) and 601-698 (EFDQ…TPGS). Composition is skewed to polar residues over residues 504-516 (TPKSSKGTDSKTP) and 606-627 (LSPSPSTSLHMNATDNPPTLSP). Positions 631–642 (MKSDFVDKENSS) are enriched in basic and acidic residues. A compositionally biased stretch (low complexity) spans 658–675 (DNSSPQFKSSSSPSSRNS). Residues 684–697 (NAPNSPVSVPTTPG) show a composition bias toward polar residues.

Belongs to the WD repeat cdt2 family. As to quaternary structure, component of the DCX(DTL) E3 ubiquitin ligase complex, at least composed of cul4 (cul4a or cul4b), ddb1, dtl/cdt2 and rbx1.

Its subcellular location is the nucleus. The protein resides in the cytoplasm. It localises to the cytoskeleton. The protein localises to the microtubule organizing center. It is found in the centrosome. Its subcellular location is the chromosome. It functions in the pathway protein modification; protein ubiquitination. Functionally, substrate-specific adapter of a DCX (DDB1-CUL4-X-box) E3 ubiquitin-protein ligase complex required for cell cycle control, DNA damage response and translesion DNA synthesis. The DCX(DTL) complex, also named CRL4(CDT2) complex, mediates the polyubiquitination and subsequent degradation of CDT1, CDKN1A/p21(CIP1), KMT5A and SDE2. CDT1 degradation in response to DNA damage is necessary to ensure proper cell cycle regulation of DNA replication. CDKN1A/p21(CIP1) degradation during S phase or following UV irradiation is essential to control replication licensing. KMT5A degradation is also important for a proper regulation of mechanisms such as TGF-beta signaling, cell cycle progression, DNA repair and cell migration. Most substrates require their interaction with PCNA for their polyubiquitination: substrates interact with PCNA via their PIP-box, and those containing the 'K+4' motif in the PIP box, recruit the DCX(DTL) complex, leading to their degradation. In undamaged proliferating cells, the DCX(DTL) complex also promotes the 'Lys-164' monoubiquitination of PCNA, thereby being involved in PCNA-dependent translesion DNA synthesis. May play a role in the regulation of the circadian clock. This chain is Denticleless protein homolog B (dtl-b), found in Xenopus laevis (African clawed frog).